Here is a 174-residue protein sequence, read N- to C-terminus: MTGIIRNKVFFQIKQGNTPLGRVVFELYNDIVPKTAENFRALCTGEKGIGKSGKPLHYKGSSFHRVIKNFMVQGGDFTHGTGIGGESIYGRTFNDENFLVKHKIGCLSMANAGKNTNGSQFFITTAETPHLNGGHTVFGEVVEGFDIVKKVENAETDRSDRPKAACVIEDCGQL.

The PPIase cyclophilin-type domain maps to 10-173; the sequence is FFQIKQGNTP…AACVIEDCGQ (164 aa).

This sequence belongs to the cyclophilin-type PPIase family. PPIase D subfamily.

It localises to the mitochondrion. It carries out the reaction [protein]-peptidylproline (omega=180) = [protein]-peptidylproline (omega=0). Binds cyclosporin A (CsA). CsA mediates some of its effects via an inhibitory action on PPIase. Functionally, PPIases accelerate the folding of proteins. It catalyzes the cis-trans isomerization of proline imidic peptide bonds in oligopeptides. The polypeptide is Peptidyl-prolyl cis-trans isomerase D, mitochondrial (cypD) (Dictyostelium discoideum (Social amoeba)).